We begin with the raw amino-acid sequence, 510 residues long: 2,3-bisphosphoglycerate-independent phosphoglycerate mutase (510 aa).

Mn(2+) is bound by residues D13 and S63. S63 serves as the catalytic Phosphoserine intermediate. Residues H124, 154-155, R186, R192, 262-265, and K334 contribute to the substrate site; these read RD and RADR. Mn(2+) is bound by residues D401, H405, D442, H443, and H461.

This sequence belongs to the BPG-independent phosphoglycerate mutase family. In terms of assembly, monomer. The cofactor is Mn(2+).

The enzyme catalyses (2R)-2-phosphoglycerate = (2R)-3-phosphoglycerate. It functions in the pathway carbohydrate degradation; glycolysis; pyruvate from D-glyceraldehyde 3-phosphate: step 3/5. Catalyzes the interconversion of 2-phosphoglycerate and 3-phosphoglycerate. The protein is 2,3-bisphosphoglycerate-independent phosphoglycerate mutase of Vibrio cholerae serotype O1 (strain ATCC 39541 / Classical Ogawa 395 / O395).